The chain runs to 383 residues: Chitinase-3-like protein 1 (383 aa).

The signal sequence occupies residues 1–21 (MGLRASGTGFVVLVLLQSCAA). Positions 22-383 (YKLICYYTSW…SAVKDVLAEV (362 aa)) constitute a GH18 domain. C26 and C51 are disulfide-bonded. N-linked (GlcNAc...) asparagine glycosylation is present at N60. Chitin is bound by residues 70 to 71 (EW), 97 to 100 (GGWN), Y141, 204 to 207 (LTYD), and R263. C300 and C364 are oxidised to a cystine. Residues 324–338 (QWVAYDDQESVKNKA) form an important for AKT1 activation and IL8 production region. W352 lines the chitin pocket. A glycan (N-linked (GlcNAc...) asparagine) is linked at N367.

This sequence belongs to the glycosyl hydrolase 18 family. As to quaternary structure, monomer.

It is found in the secreted. It localises to the extracellular space. Its subcellular location is the cytoplasm. The protein localises to the perinuclear region. The protein resides in the endoplasmic reticulum. Functionally, carbohydrate-binding lectin with a preference for chitin. Has no chitinase activity. May play a role in tissue remodeling and in the capacity of cells to respond to and cope with changes in their environment. Plays a role in T-helper cell type 2 (Th2) inflammatory response and IL-13-induced inflammation, regulating allergen sensitization, inflammatory cell apoptosis, dendritic cell accumulation and M2 macrophage differentiation. Facilitates invasion of pathogenic enteric bacteria into colonic mucosa and lymphoid organs. Mediates activation of AKT1 signaling pathway and subsequent IL8 production in colonic epithelial cells. Regulates antibacterial responses in lung by contributing to macrophage bacterial killing, controlling bacterial dissemination and augmenting host tolerance. Also regulates hyperoxia-induced injury, inflammation and epithelial apoptosis in lung. The protein is Chitinase-3-like protein 1 (CHI3L1) of Capra hircus (Goat).